The primary structure comprises 694 residues: Ubiquitin-like modifier-activating enzyme ATG7 (694 aa).

Positions 370–375 match the GXGXXG motif motif; sequence GAGTLG. Cys-550 functions as the Glycyl thioester intermediate in the catalytic mechanism. The homodimerization stretch occupies residues 650–689; that stretch reads ALQEKEYVAELSGLAEVQRRAEEMAAHVDWEEDDDLVDDG.

This sequence belongs to the ATG7 family. Homodimer. Interacts with ATG8 through a thioester bond between Cys-550 and the C-terminal 'Gly-116' of ATG8 and with ATG12 through a thioester bond between Cys-550 and the C-terminal 'Gly-160' of ATG12. Also interacts with ATG3.

It is found in the cytoplasm. The protein localises to the preautophagosomal structure. Functionally, E1-like activating enzyme involved in the 2 ubiquitin-like systems required for cytoplasm to vacuole transport (Cvt) and autophagy. Activates ATG12 for its conjugation with ATG5 and ATG8 for its conjugation with phosphatidylethanolamine. Both systems are needed for the ATG8 association to Cvt vesicles and autophagosomes membranes. Autophagy is essential for maintenance of amino acid levels and protein synthesis under nitrogen starvation. Required for selective autophagic degradation of the nucleus (nucleophagy) as well as for mitophagy which contributes to regulate mitochondrial quantity and quality by eliminating the mitochondria to a basal level to fulfill cellular energy requirements and preventing excess ROS production. Autophagy is required for proper vegetative growth, asexual/sexual reproduction, and full virulence. Autophagy is particularly involved in the biosynthesis of deoxynivalenol (DON), an important virulence determinant. This Gibberella zeae (strain ATCC MYA-4620 / CBS 123657 / FGSC 9075 / NRRL 31084 / PH-1) (Wheat head blight fungus) protein is Ubiquitin-like modifier-activating enzyme ATG7.